The following is a 1103-amino-acid chain: Ataxin-2 homolog (1103 aa).

Positions 1-10 are enriched in basic residues; the sequence is MSQSKDKKKF. The tract at residues 1 to 75 is disordered; sequence MSQSKDKKKF…QQQQQQQQPF (75 aa). Over residues 11-28 the composition is skewed to gly residues; it reads VGGGGGGGGNNSGGGGYG. Low complexity-rich tracts occupy residues 33–44 and 56–73; these read NNNNNNRNSSNN and HHQQ…QQQQ. One can recognise a Sm domain in the interval 84–166; that stretch reads RTVFMSMSLV…FLQITATGVV (83 aa). Positions 258-287 form a coiled coil; that stretch reads EFYKINQSVAEKKAQEIENEKSGNIHLLEE. Disordered regions lie at residues 305–474, 516–557, 615–763, 901–920, and 930–1103; these read VVRK…RESP, TNKS…APKS, LVIK…NNTT, HTMK…VQPQ, and QPQG…NQYH. Residues 312-356 are compositionally biased toward low complexity; the sequence is PTSTTSTTTSPPTQNPTPSSSVYIPPSKRNNNNNTPSTPSVTSPP. Positions 358–371 are enriched in basic and acidic residues; sequence VDKKHQQTHQDKKQ. Positions 366–403 form a coiled coil; the sequence is HQDKKQTQQQQQQQQQQQQQQQQQQQQQQQQQQQQQTQ. Residues 372–463 show a composition bias toward low complexity; that stretch reads TQQQQQQQQQ…NNTPTATNTN (92 aa). Polar residues predominate over residues 516 to 529; sequence TNKSMNKSGSNIST. Low complexity-rich tracts occupy residues 530–544, 637–676, and 683–694; these read TPVN…NGTP, PTQL…TPST, and TTTPITTTILTE. Residues 691 to 730 adopt a coiled-coil conformation; that stretch reads ILTENKSDDKEKEKEKEKEKVDEKEKEKEKEKSDEKDKDQ. Basic and acidic residues predominate over residues 695-741; that stretch reads NKSDDKEKEKEKEKEKVDEKEKEKEKEKSDEKDKDQSSTLVEKKDES. Positions 742-763 are enriched in low complexity; sequence SSSSNTTTTTTNTTNNNNNNTT. Over residues 930-957 the composition is skewed to low complexity; it reads QPQGGVVQPSAGGAPKTMYQQQQQQQQQ. A compositionally biased stretch (gly residues) spans 960–969; that stretch reads QPGGPMGVQR. The span at 974–984 shows a compositional bias: low complexity; sequence PPQQQPQQQQQ. A compositionally biased stretch (pro residues) spans 1020–1031; sequence YAVPHPQYPMPP. Residues 1062-1076 show a composition bias toward low complexity; it reads QVVSQNSPQQDSPSN.

Belongs to the ataxin-2 family.

The sequence is that of Ataxin-2 homolog (atxn2) from Dictyostelium discoideum (Social amoeba).